Here is an 817-residue protein sequence, read N- to C-terminus: Probable beta-glucosidase G (817 aa).

An N-terminal signal peptide occupies residues 1–20; sequence MASIAHLIFSGLLAATVANS. Residues N40, N58, N229, and N276 are each glycosylated (N-linked (GlcNAc...) asparagine). D304 is an active-site residue. Residues N343, N350, N402, N507, N563, N584, N623, N662, N679, and N715 are each glycosylated (N-linked (GlcNAc...) asparagine).

This sequence belongs to the glycosyl hydrolase 3 family.

Its subcellular location is the secreted. It catalyses the reaction Hydrolysis of terminal, non-reducing beta-D-glucosyl residues with release of beta-D-glucose.. Its pathway is glycan metabolism; cellulose degradation. In terms of biological role, beta-glucosidases are one of a number of cellulolytic enzymes involved in the degradation of cellulosic biomass. Catalyzes the last step releasing glucose from the inhibitory cellobiose. The polypeptide is Probable beta-glucosidase G (bglG) (Neosartorya fischeri (strain ATCC 1020 / DSM 3700 / CBS 544.65 / FGSC A1164 / JCM 1740 / NRRL 181 / WB 181) (Aspergillus fischerianus)).